The following is a 542-amino-acid chain: Sodium/hydrogen exchanger 8 (542 aa).

11 consecutive transmembrane segments (helical) span residues 55–75, 79–99, 118–138, 151–171, 186–206, 256–276, 306–326, 349–369, 374–394, 412–432, and 446–466; these read EQSS…CIIL, LIRY…LGIL, EEMF…IFES, IGSI…VVGG, NMTD…VATI, TFLQ…ALGT, AYLP…VFAF, LVLF…NFFR, TPKM…PYAL, TTIV…MPLI, and NKKD…ESEH. Threonine 471 carries the phosphothreonine modification. Phosphoserine occurs at positions 532 and 534.

This sequence belongs to the monovalent cation:proton antiporter 1 (CPA1) transporter (TC 2.A.36) family.

Its subcellular location is the golgi apparatus membrane. It localises to the golgi apparatus. It is found in the trans-Golgi network membrane. The protein resides in the endosome. The protein localises to the multivesicular body membrane. Its subcellular location is the apical cell membrane. It localises to the cytoplasmic vesicle. It is found in the secretory vesicle. The protein resides in the acrosome. It carries out the reaction Na(+)(in) + H(+)(out) = Na(+)(out) + H(+)(in). Its function is as follows. Na(+)/H(+) antiporter. Mediates the electoneutral exchange of intracellular H(+) ions for extracellular Na(+) in 1:1 stoichiometry. Acts as an Na(+)/H(+) exchanger in the trans-Golgi. Contributes to the regulation of pH regulation of Golgi apparatus, and consequently, in protein trafficking and endosomal morphology. In germ cells, plays a crucial role in acrosome biogenesis and sperm development, probably by playing a role in the fusion of the Golgi-derived vesicles that form the acrosomal cap. Can also be active at the cell surface of specialized cells. In the small intestine, at the cell membrane, plays a major physiological role in transepithelial absorption of Na(+) and regulates intracellular pH homeostasis of intestinal epithelial cells. Acts as an important regulator of mucosal integrity in the intestine and in the stomach, could mediate the pH fluctuation necessary for mucin exocytosis or assist membrane trafficking of other proteins. Plays a role in photoreceptor survival and in the maintenance of intracellular pH homeostasis in retinal pigment epithelium (RPE cells). In Macaca fascicularis (Crab-eating macaque), this protein is Sodium/hydrogen exchanger 8 (SLC9A8).